Reading from the N-terminus, the 373-residue chain is Tomoregulin-1 (373 aa).

The signal sequence occupies residues 1-36; it reads MGAQAPLRLPAAPPLAVCGYTSVLLLFAFCLPGSGA. Over 37-323 the chain is Extracellular; the sequence is SNQPAGGGGD…VPSRQKLTHV (287 aa). Residue asparagine 56 is glycosylated (N-linked (GlcNAc...) asparagine). The Kazal-like 1 domain occupies 91–138; sequence ACQFQCHTNYIPVCGSNGDTYQNECFLRRAACKHQKDITVVARGPCYS. Intrachain disulfides connect cysteine 92-cysteine 122, cysteine 96-cysteine 115, and cysteine 104-cysteine 136. Asparagine 140 carries N-linked (GlcNAc...) asparagine glycosylation. The interval 140–162 is disordered; that stretch reads NGSGSGEGEEEGSGAGAHRKHSK. A Kazal-like 2 domain is found at 182–230; sequence VCNIDCSGYSFNPVCASDGSSYNNPCFVREASCIRQEQIDIRHLGHCTD. Intrachain disulfides connect cysteine 183-cysteine 214, cysteine 187-cysteine 207, cysteine 196-cysteine 228, cysteine 268-cysteine 281, cysteine 276-cysteine 292, and cysteine 294-cysteine 303. The EGF-like domain maps to 264-304; that stretch reads SHMPCPENLNGYCIHGKCEFIYSTQKASCRCESGYTGQHCE. The helical transmembrane segment at 324-344 threads the bilayer; that stretch reads LIAAIIGAVQIAIIVAIVMCI. At 345–373 the chain is on the cytoplasmic side; it reads TRKCPKNNRGRRQKQNLGHFTSETSSRMV. The tract at residues 352–373 is disordered; the sequence is NRGRRQKQNLGHFTSETSSRMV. Over residues 359–373 the composition is skewed to polar residues; that stretch reads QNLGHFTSETSSRMV.

Belongs to the tomoregulin family. May interact with ST14.

Its subcellular location is the cell membrane. In terms of biological role, neuron-specific restriction factor that prevents herpes simplex virus 1 (HHV-1) infection in the brain by blocking viral entry. Also able to restrict herpes simplex virus 2 (HHV-2) infection, although to a lesser extent. Acts by preventing the association between the viral glycoprotein D (gD) and its cell surface receptor NECTIN1, thereby inhibiting fusion of the virus and the cell membrane. Also able to prevent the association between the viral glycoprotein B (gB) and MYH9/NMMHC-IIA and MYH10/NMMHC-IIB receptors. This chain is Tomoregulin-1 (Tmeff1), found in Rattus norvegicus (Rat).